The sequence spans 220 residues: Cell division protein SepF (220 aa).

The tract at residues 1-120 (MAIKDAFNKM…RREQYQHAAH (120 aa)) is disordered. Positions 26–35 (LSSKKQEEPV) are enriched in basic and acidic residues. Residues 39 to 79 (QQTSRPNQQQQAARASQPQQPKQARPQMQAQQRPQSQSRAA) show a composition bias toward low complexity. Residues 93–102 (VSHDYNDRRA) show a composition bias toward basic and acidic residues.

The protein belongs to the SepF family. As to quaternary structure, homodimer. Interacts with FtsZ.

Its subcellular location is the cytoplasm. Functionally, cell division protein that is part of the divisome complex and is recruited early to the Z-ring. Probably stimulates Z-ring formation, perhaps through the cross-linking of FtsZ protofilaments. Its function overlaps with FtsA. In Streptococcus equi subsp. equi (strain 4047), this protein is Cell division protein SepF.